The following is a 251-amino-acid chain: Zinc import ATP-binding protein ZnuC (251 aa).

The ABC transporter domain occupies 5–220; it reads VSLENVSVSF…PEFISMFGPR (216 aa). Residue 37–44 coordinates ATP; it reads GPNGAGKS.

Belongs to the ABC transporter superfamily. Zinc importer (TC 3.A.1.15.5) family. The complex is composed of two ATP-binding proteins (ZnuC), two transmembrane proteins (ZnuB) and a solute-binding protein (ZnuA).

The protein localises to the cell inner membrane. The enzyme catalyses Zn(2+)(out) + ATP(in) + H2O(in) = Zn(2+)(in) + ADP(in) + phosphate(in) + H(+)(in). Functionally, part of the ABC transporter complex ZnuABC involved in zinc import. Responsible for energy coupling to the transport system. The sequence is that of Zinc import ATP-binding protein ZnuC from Salmonella choleraesuis (strain SC-B67).